Consider the following 138-residue polypeptide: Small ribosomal subunit protein uS11 (138 aa).

Residues 1-12 (MPPAKKAAAAPK) show a composition bias toward low complexity. The segment at 1–27 (MPPAKKAAAAPKKGQKTRRREKKNVPH) is disordered. Basic residues predominate over residues 13–22 (KGQKTRRREK).

The protein belongs to the universal ribosomal protein uS11 family. In terms of assembly, part of the 30S ribosomal subunit. Interacts with proteins S7 and S18. Binds to IF-3.

Its function is as follows. Located on the platform of the 30S subunit, it bridges several disparate RNA helices of the 16S rRNA. Forms part of the Shine-Dalgarno cleft in the 70S ribosome. The protein is Small ribosomal subunit protein uS11 of Mycolicibacterium paratuberculosis (strain ATCC BAA-968 / K-10) (Mycobacterium paratuberculosis).